Consider the following 217-residue polypeptide: Ranaspumin (217 aa).

4 disulfide bridges follow: Cys-18-Cys-67, Cys-38-Cys-114, Cys-125-Cys-168, and Cys-146-Cys-207.

Monomer. As to expression, exclusively expressed in females in the early oviduct, the glandular part of the oviduct (pars convoluta dilata) and in the cloaca.

It is found in the secreted. In terms of biological role, acts as a surfactant. Is the major protein constituent (45%) of foam nests. Has no antimicrobial activity, no larvicidal activity, and is not toxic to mice. The sequence is that of Ranaspumin from Leptodactylus vastus (Northeastern pepper frog).